Consider the following 317-residue polypeptide: Retinol dehydrogenase 7 (317 aa).

Residue 33–57 (FITGCDSGFGNLLARQLDRRGMRVL) coordinates NADP(+). Serine 164 is a binding site for substrate. The active-site Proton acceptor is the tyrosine 176.

The protein belongs to the short-chain dehydrogenases/reductases (SDR) family.

The protein localises to the microsome. The protein resides in the endoplasmic reticulum. The enzyme catalyses all-trans-retinol--[retinol-binding protein] + NAD(+) = all-trans-retinal--[retinol-binding protein] + NADH + H(+). The protein operates within cofactor metabolism; retinol metabolism. Functionally, acts on retinol bound on cellular retinol-binding protein (CRBP). In Rattus norvegicus (Rat), this protein is Retinol dehydrogenase 7.